The sequence spans 268 residues: CCAAT/enhancer-binding protein delta (268 aa).

3 disordered regions span residues 1 to 48 (MSAA…LGST), 97 to 132 (GLELLQGGPTRPPGVGSVARGPLKREPDWGDGDAPG), and 152 to 219 (AAQP…NQEM). Serine 2 carries the post-translational modification N-acetylserine. Lysine 120 is covalently cross-linked (Glycyl lysine isopeptide (Lys-Gly) (interchain with G-Cter in SUMO)). A compositionally biased stretch (pro residues) spans 155–167 (PTPPTSPEPPRGS). A compositionally biased stretch (basic and acidic residues) spans 177–201 (VREKGAGKRGPDRGSPEYRQRRERN). The bZIP domain maps to 191-254 (SPEYRQRRER…AGLRQFFKKL (64 aa)). Residues 195-222 (RQRRERNNIAVRKSRDKAKRRNQEMQQK) form a basic motif region. The tract at residues 226–254 (LSAENEKLHQRVEQLTRDLAGLRQFFKKL) is leucine-zipper.

This sequence belongs to the bZIP family. C/EBP subfamily. Binds DNA as a homodimer and as a heterodimer. Can form stable heterodimers with CEBPA, CEBPB and CEBPE. Directly interacts with SPI1/PU.1; this interaction does not affect DNA-binding properties of each partner. Interacts with PRDM16.

The protein localises to the nucleus. Functionally, transcription activator that recognizes two different DNA motifs: the CCAAT homology common to many promoters and the enhanced core homology common to many enhancers. Important transcription factor regulating the expression of genes involved in immune and inflammatory responses. Transcriptional activator that enhances IL6 transcription alone and as heterodimer with CEBPB. This is CCAAT/enhancer-binding protein delta (Cebpd) from Mus musculus (Mouse).